The chain runs to 527 residues: Type II methyltransferase M.XamI (527 aa).

This sequence belongs to the N(4)/N(6)-methyltransferase family.

The enzyme catalyses a 2'-deoxyadenosine in DNA + S-adenosyl-L-methionine = an N(6)-methyl-2'-deoxyadenosine in DNA + S-adenosyl-L-homocysteine + H(+). A gamma subtype methylase that recognizes the double-stranded sequence 5'-GTCGAC-3', possibly methylates A-5 on both strands, and protects the DNA from cleavage by the XamI endonuclease. The protein is Type II methyltransferase M.XamI of Xanthomonas campestris pv. amaranthicola.